A 112-amino-acid polypeptide reads, in one-letter code: Large ribosomal subunit protein uL22 (112 aa).

The protein belongs to the universal ribosomal protein uL22 family. In terms of assembly, part of the 50S ribosomal subunit.

This protein binds specifically to 23S rRNA; its binding is stimulated by other ribosomal proteins, e.g. L4, L17, and L20. It is important during the early stages of 50S assembly. It makes multiple contacts with different domains of the 23S rRNA in the assembled 50S subunit and ribosome. Its function is as follows. The globular domain of the protein is located near the polypeptide exit tunnel on the outside of the subunit, while an extended beta-hairpin is found that lines the wall of the exit tunnel in the center of the 70S ribosome. The polypeptide is Large ribosomal subunit protein uL22 (Akkermansia muciniphila (strain ATCC BAA-835 / DSM 22959 / JCM 33894 / BCRC 81048 / CCUG 64013 / CIP 107961 / Muc)).